Consider the following 1442-residue polypeptide: Sulfite reductase [NADPH] subunit beta (1442 aa).

The 150-residue stretch at 682–831 (LHVYYASDGG…AYSEWEPKLW (150 aa)) folds into the Flavodoxin-like domain. Residue Ser903 is modified to Phosphoserine. Residues Cys1300, Cys1306, Cys1345, and Cys1349 each coordinate [4Fe-4S] cluster. Cys1349 contacts siroheme.

This sequence belongs to the nitrite and sulfite reductase 4Fe-4S domain family. In terms of assembly, alpha(2)-beta(2). The alpha component is a flavoprotein, the beta component is a hemoprotein. Siroheme serves as cofactor. [4Fe-4S] cluster is required as a cofactor.

Its subcellular location is the cytoplasm. The catalysed reaction is hydrogen sulfide + 3 NADP(+) + 3 H2O = sulfite + 3 NADPH + 4 H(+). It participates in sulfur metabolism; hydrogen sulfide biosynthesis; hydrogen sulfide from sulfite (NADPH route): step 1/1. Its function is as follows. Catalyzes the reduction of sulfite to sulfide, one of several activities required for the biosynthesis of L-cysteine from sulfate. This is Sulfite reductase [NADPH] subunit beta (MET5) from Saccharomyces cerevisiae (strain ATCC 204508 / S288c) (Baker's yeast).